A 294-amino-acid polypeptide reads, in one-letter code: Nucleophosmin (294 aa).

Met-1 carries the N-acetylmethionine modification. A necessary for interaction with APEX1 region spans residues 1-117; it reads MEDSMDMDMS…PVHISGQHLV (117 aa). The interval 1–186 is required for interaction with SENP3; the sequence is MEDSMDMDMS…DDDDFDDEEA (186 aa). Ser-4 carries the post-translational modification Phosphoserine; by PLK1 and PLK2. Ser-10 bears the Phosphoserine mark. Lys-27 participates in a covalent cross-link: Glycyl lysine isopeptide (Lys-Gly) (interchain with G-Cter in SUMO2). Residue Lys-32 is modified to N6-acetyllysine; alternate. Lys-32 participates in a covalent cross-link: Glycyl lysine isopeptide (Lys-Gly) (interchain with G-Cter in SUMO1); alternate. A Glycyl lysine isopeptide (Lys-Gly) (interchain with G-Cter in SUMO2); alternate cross-link involves residue Lys-32. Ser-43 bears the Phosphoserine mark. Tyr-67 carries the post-translational modification Phosphotyrosine. Position 70 is a phosphoserine (Ser-70). Phosphothreonine is present on residues Thr-75 and Thr-95. Residues 120-132 show a composition bias toward acidic residues; sequence EEDAESEDEEEED. Residues 120–247 are disordered; that stretch reads EEDAESEDEE…PKGPSSVEDI (128 aa). Ser-125 carries the phosphoserine; by CDK2 modification. A phosphoserine mark is found at Ser-137 and Ser-139. Residue Lys-141 forms a Glycyl lysine isopeptide (Lys-Gly) (interchain with G-Cter in SUMO2) linkage. N6-acetyllysine; alternate is present on Lys-150. Lys-150 is covalently cross-linked (Glycyl lysine isopeptide (Lys-Gly) (interchain with G-Cter in SUMO2); alternate). Positions 152-157 match the Nuclear localization signal motif; sequence PQKKVK. Lys-154 is modified (N6-acetyllysine). A compositionally biased stretch (acidic residues) spans 161–187; it reads DEDDDDDDEEDDDEDDDDDDFDDEEAE. The interval 187-215 is interaction with NOP2; it reads EEKAPVKKSIRDTPAKNAQKSNQNGKDSK. Over residues 188–200 the composition is skewed to basic and acidic residues; the sequence is EKAPVKKSIRDTP. The short motif at 191–197 is the Nuclear localization signal element; it reads PVKKSIR. Position 199 is a phosphothreonine; by CDK1, CDK2 and CDK6 (Thr-199). A compositionally biased stretch (polar residues) spans 202-222; it reads KNAQKSNQNGKDSKPSSTPRS. The residue at position 207 (Ser-207) is an ADP-ribosylserine. Lys-212 carries the N6-acetyllysine modification. A Glycyl lysine isopeptide (Lys-Gly) (interchain with G-Cter in SUMO2) cross-link involves residue Lys-215. Phosphothreonine; by CDK1 is present on Thr-219. Positions 223 to 235 are enriched in basic and acidic residues; that stretch reads KGQESFKKQEKTP. Ser-227 carries the post-translational modification Phosphoserine. Lys-229 carries the N6-acetyllysine modification. Lys-230 carries the N6-acetyllysine; alternate modification. Lys-230 participates in a covalent cross-link: Glycyl lysine isopeptide (Lys-Gly) (interchain with G-Cter in SUMO); alternate. Thr-234 and Thr-237 each carry phosphothreonine; by CDK1. A phosphoserine mark is found at Ser-242 and Ser-243. The segment at 243–294 is required for nucleolar localization; that stretch reads SVEDIKAKMQASIEKGGSLPKVEAKFINYVKNCFRMTDQEAIQDLWQWRKSL. Lys-248 is covalently cross-linked (Glycyl lysine isopeptide (Lys-Gly) (interchain with G-Cter in SUMO1); alternate). Glycyl lysine isopeptide (Lys-Gly) (interchain with G-Cter in SUMO2); alternate cross-links involve residues Lys-248 and Lys-250. The residue at position 250 (Lys-250) is an N6-acetyllysine; alternate. Position 254 is a phosphoserine (Ser-254). Lys-257 carries the post-translational modification N6-acetyllysine; alternate. Lys-257 participates in a covalent cross-link: Glycyl lysine isopeptide (Lys-Gly) (interchain with G-Cter in SUMO1); alternate. Lys-257 participates in a covalent cross-link: Glycyl lysine isopeptide (Lys-Gly) (interchain with G-Cter in SUMO2); alternate. Lys-257 is modified (N6-acetyllysine). Ser-260 carries the post-translational modification Phosphoserine. Glycyl lysine isopeptide (Lys-Gly) (interchain with G-Cter in SUMO2); alternate cross-links involve residues Lys-263, Lys-267, and Lys-273. Lys-263 is covalently cross-linked (Glycyl lysine isopeptide (Lys-Gly) (interchain with G-Cter in SUMO); alternate). 2 positions are modified to N6-acetyllysine; alternate: Lys-267 and Lys-273. Residue Lys-267 forms a Glycyl lysine isopeptide (Lys-Gly) (interchain with G-Cter in SUMO1); alternate linkage. Lys-267 carries the post-translational modification N6-succinyllysine; alternate. Position 279 is a phosphothreonine (Thr-279). Lys-292 bears the N6-acetyllysine mark.

It belongs to the nucleoplasmin family. Decamer formed by two pentameric rings associated in a head-to-head fashion. Disulfide-linked dimers under certain conditions. The SWAP complex consists of NPM1, NCL, PARP1 and SWAP70. Interacts with NSUN2 and SENP3. Interacts with the methylated form of RPS10. Interacts (via N-terminal domain) with APEX1; the interaction is RNA-dependent and decreases in hydrogen peroxide-damaged cells. Interacts with isoform 1 of NEK2. Interacts with ROCK2 and BRCA2. Interacts with RPGR. Interacts with CENPW. Interacts with EIF2AK2/PKR. Interacts with CEBPA (isoform 4). Interacts with DDX31; this interaction prevents interaction between NPM1 and HDM2. Interacts with MYC; competitive with NOP53. Interacts with NOP53; the interaction is direct and competitive with MYC. Interacts with LRRC34. Interacts with RRP1B. Interacts with NPM3. Interacts with ALKBH2. Interacts with TTF1 (via C-terminal region). Interacts with NOP2. Interacts with ARID3C (via REKLES DOMAIN); the interaction mediates ARID3C nuclear shuttling. As to quaternary structure, (Microbial infection) Interacts with hepatitis delta virus S-HDAg. In terms of assembly, (Microbial infection) Interacts with HTLV1 Rex protein (via N-terminal nuclear localization signal). Acetylated at C-terminal lysine residues, thereby increasing affinity to histones. Post-translationally, ADP-ribosylated. In terms of processing, phosphorylated at Ser-4 by PLK1 and PLK2. Phosphorylation at Ser-4 by PLK2 in S phase is required for centriole duplication and is sufficient to trigger centriole replication. Phosphorylation at Ser-4 by PLK1 takes place during mitosis. Phosphorylated by CDK2 at Ser-125 and Thr-199. Phosphorylation at Thr-199 may trigger initiation of centrosome duplication. Phosphorylated by CDK1 at Thr-199, Thr-219, Thr-234 and Thr-237 during cell mitosis. When these four sites are phosphorated, RNA-binding activity seem to be abolished. May be phosphorylated at Ser-70 by NEK2. The Thr-199 phosphorylated form has higher affinity for ROCK2. CDK6 triggers Thr-199 phosphorylation when complexed to Kaposi's sarcoma herpesvirus (KSHV) V-cyclin, leading to viral reactivation by reducing viral LANA levels. Sumoylated by ARF. Post-translationally, ubiquitinated. Ubiquitination leads to proteasomal degradation. Deubiquitinated by USP36.

The protein resides in the nucleus. The protein localises to the nucleolus. It is found in the nucleoplasm. Its subcellular location is the cytoplasm. It localises to the cytoskeleton. The protein resides in the microtubule organizing center. The protein localises to the centrosome. Involved in diverse cellular processes such as ribosome biogenesis, centrosome duplication, protein chaperoning, histone assembly, cell proliferation, and regulation of tumor suppressors p53/TP53 and ARF. Binds ribosome presumably to drive ribosome nuclear export. Associated with nucleolar ribonucleoprotein structures and bind single-stranded nucleic acids. Acts as a chaperonin for the core histones H3, H2B and H4. Stimulates APEX1 endonuclease activity on apurinic/apyrimidinic (AP) double-stranded DNA but inhibits APEX1 endonuclease activity on AP single-stranded RNA. May exert a control of APEX1 endonuclease activity within nucleoli devoted to repair AP on rDNA and the removal of oxidized rRNA molecules. In concert with BRCA2, regulates centrosome duplication. Regulates centriole duplication: phosphorylation by PLK2 is able to trigger centriole replication. Negatively regulates the activation of EIF2AK2/PKR and suppresses apoptosis through inhibition of EIF2AK2/PKR autophosphorylation. Antagonizes the inhibitory effect of ATF5 on cell proliferation and relieves ATF5-induced G2/M blockade. In complex with MYC enhances the transcription of MYC target genes. May act as chaperonin or cotransporter in the nucleolar localization of transcription termination factor TTF1. The sequence is that of Nucleophosmin from Homo sapiens (Human).